Here is a 160-residue protein sequence, read N- to C-terminus: Large ribosomal subunit protein uL30m (160 aa).

The transit peptide at 1 to 34 directs the protein to the mitochondrion; sequence MAGVLRSVFQRPPGRLQTVKKGAESLIGTEWIRH. Residues 45 to 64 form a disordered region; the sequence is VFQPRPEDHEKYGGDPQNPH.

It belongs to the universal ribosomal protein uL30 family. Component of the mitochondrial ribosome large subunit (39S) which comprises a 16S rRNA and about 50 distinct proteins.

It is found in the mitochondrion. This chain is Large ribosomal subunit protein uL30m (Mrpl30), found in Rattus norvegicus (Rat).